The chain runs to 1076 residues: Guanylyl cyclase C (1076 aa).

A signal peptide spans 1–23 (MKSPLLGLVVWSLLLQLLQPGLA). Residues 24 to 433 (FWNSQISQNC…PHDIPGLGPH (410 aa)) lie on the Extracellular side of the membrane. Asn-35, Asn-82, Asn-191, Asn-198, Asn-287, Asn-306, Asn-310, Asn-348, and Asn-405 each carry an N-linked (GlcNAc...) asparagine glycan. The chain crosses the membrane as a helical span at residues 434–457 (ILLIAVCTLAGVVVLILLIALLVL). Topologically, residues 458-1076 (RKYKKDNELR…NTTDQDSTYF (619 aa)) are cytoplasmic. The Protein kinase domain occupies 492–752 (LKIDDDKKRD…KIENTLAKIF (261 aa)). The Guanylate cyclase domain occupies 827 to 957 (TVYFSDIVGF…DTVNTASRME (131 aa)).

The protein belongs to the adenylyl cyclase class-4/guanylyl cyclase family. Homotrimer. Interacts via its C-terminal region with NHERF4. Interacts with the lectin chaperone VIP36. Post-translationally, glycosylation at Asn-62 is required for interaction with VIP36 while glycosylation at Asn-348 and Asn-405 modulates ligand-mediated GC-C activation.

It is found in the cell membrane. The protein localises to the endoplasmic reticulum membrane. The enzyme catalyses GTP = 3',5'-cyclic GMP + diphosphate. In terms of biological role, guanylyl cyclase that catalyzes synthesis of cyclic GMP (cGMP) from GTP. The polypeptide is Guanylyl cyclase C (GUCY2C) (Cavia porcellus (Guinea pig)).